We begin with the raw amino-acid sequence, 206 residues long: MKLLLASNNAKKLKELQRILDQAGLDSVELLALRDVEAYDEPIEDGRTFADNAQIKARAGVAHTGIATIADDSGIAVEELNGMPGVLSARWSGAHGNDTANNELLLAQMEHVPDERRNAAFVSVCVLALPDGQEFVQEGRWEGQLLRGPKGENGFGYDPLFIPAEEIGGQGRSSAELSAEEKDALSHRGQALRGLVEKIAQVAAAS.

7–12 (SNNAKK) provides a ligand contact to substrate. The active-site Proton acceptor is the D72. D72 provides a ligand contact to Mg(2+). Substrate is bound by residues S73, 155 to 158 (FGYD), K182, and 187 to 188 (HR).

The protein belongs to the HAM1 NTPase family. In terms of assembly, homodimer. It depends on Mg(2+) as a cofactor.

The enzyme catalyses XTP + H2O = XMP + diphosphate + H(+). It carries out the reaction dITP + H2O = dIMP + diphosphate + H(+). It catalyses the reaction ITP + H2O = IMP + diphosphate + H(+). Pyrophosphatase that catalyzes the hydrolysis of nucleoside triphosphates to their monophosphate derivatives, with a high preference for the non-canonical purine nucleotides XTP (xanthosine triphosphate), dITP (deoxyinosine triphosphate) and ITP. Seems to function as a house-cleaning enzyme that removes non-canonical purine nucleotides from the nucleotide pool, thus preventing their incorporation into DNA/RNA and avoiding chromosomal lesions. The chain is dITP/XTP pyrophosphatase from Corynebacterium glutamicum (strain R).